Consider the following 184-residue polypeptide: MKSENVSKKKSILEWAKAIVIAVVLALLIRNFIFAPYVVDGDSMYPTLHNRERVFVNMTVKYIGEFDRGDIVVLNGDDVHYVKRIIGLPGDTVEMKNDQLYINGKKVDEPYLAANKKRAKQDGFDHLTDDFGPVKVPDNKYFVMGDNRRNSMDSRNGLGLFTKKQIAGTSKFVFYPFNEMRKTN.

At 1 to 18 (MKSENVSKKKSILEWAKA) the chain is on the cytoplasmic side. Residues 19 to 39 (IVIAVVLALLIRNFIFAPYVV) traverse the membrane as a helical segment. At 40 to 184 (DGDSMYPTLH…YPFNEMRKTN (145 aa)) the chain is on the extracellular side. Active-site residues include Ser-43 and Lys-83.

Belongs to the peptidase S26 family.

The protein resides in the cell membrane. The catalysed reaction is Cleavage of hydrophobic, N-terminal signal or leader sequences from secreted and periplasmic proteins.. In terms of biological role, not essential for cell viability, but required for efficient secretion of many proteins. This is Signal peptidase I S (sipS) from Bacillus subtilis (strain 168).